Here is a 130-residue protein sequence, read N- to C-terminus: B1 protein (130 aa).

The N-terminal stretch at 1-12 (LTSLILLVAVQA) is a signal peptide. 2 disulfide bridges follow: C28-C59 and C99-C116.

Belongs to the PBP/GOBP family. N-glycosylated. In terms of tissue distribution, tubular accessory sex gland.

Its subcellular location is the secreted. May be a carrier protein for lipids. The sequence is that of B1 protein from Tenebrio molitor (Yellow mealworm beetle).